We begin with the raw amino-acid sequence, 74 residues long: Translation initiation factor IF-1 (74 aa).

The S1-like domain maps to 1 to 72; sequence MGKEDVIRME…TRGRIVYRKK (72 aa).

Belongs to the IF-1 family. Component of the 30S ribosomal translation pre-initiation complex which assembles on the 30S ribosome in the order IF-2 and IF-3, IF-1 and N-formylmethionyl-tRNA(fMet); mRNA recruitment can occur at any time during PIC assembly.

The protein resides in the cytoplasm. Functionally, one of the essential components for the initiation of protein synthesis. Stabilizes the binding of IF-2 and IF-3 on the 30S subunit to which N-formylmethionyl-tRNA(fMet) subsequently binds. Helps modulate mRNA selection, yielding the 30S pre-initiation complex (PIC). Upon addition of the 50S ribosomal subunit IF-1, IF-2 and IF-3 are released leaving the mature 70S translation initiation complex. This is Translation initiation factor IF-1 from Thermotoga maritima (strain ATCC 43589 / DSM 3109 / JCM 10099 / NBRC 100826 / MSB8).